The sequence spans 116 residues: Large ribosomal subunit protein uL18 (116 aa).

It belongs to the universal ribosomal protein uL18 family. As to quaternary structure, part of the 50S ribosomal subunit; part of the 5S rRNA/L5/L18/L25 subcomplex. Contacts the 5S and 23S rRNAs.

In terms of biological role, this is one of the proteins that bind and probably mediate the attachment of the 5S RNA into the large ribosomal subunit, where it forms part of the central protuberance. The polypeptide is Large ribosomal subunit protein uL18 (Mycoplasma pneumoniae (strain ATCC 29342 / M129 / Subtype 1) (Mycoplasmoides pneumoniae)).